The primary structure comprises 1006 residues: Probable beta-galactosidase A (1006 aa).

An N-terminal signal peptide occupies residues 1–18 (MKLLSVCAVALLAAQAAG). Substrate is bound by residues Tyr96, Asn140, Ala141, and Glu142. An N-linked (GlcNAc...) asparagine glycan is attached at Asn156. Asn199 lines the substrate pocket. The Proton donor role is filled by Glu200. The cysteines at positions 205 and 206 are disulfide-linked. An N-linked (GlcNAc...) asparagine glycan is attached at Asn207. Residue Tyr260 participates in substrate binding. The cysteines at positions 266 and 315 are disulfide-linked. Glu298 functions as the Nucleophile in the catalytic mechanism. Tyr364 contributes to the substrate binding site. N-linked (GlcNAc...) asparagine glycans are attached at residues Asn373, Asn402, Asn422, Asn622, Asn777, and Asn914.

This sequence belongs to the glycosyl hydrolase 35 family.

It is found in the secreted. It catalyses the reaction Hydrolysis of terminal non-reducing beta-D-galactose residues in beta-D-galactosides.. Its function is as follows. Cleaves beta-linked terminal galactosyl residues from gangliosides, glycoproteins, and glycosaminoglycans. The polypeptide is Probable beta-galactosidase A (lacA) (Neosartorya fischeri (strain ATCC 1020 / DSM 3700 / CBS 544.65 / FGSC A1164 / JCM 1740 / NRRL 181 / WB 181) (Aspergillus fischerianus)).